The primary structure comprises 389 residues: Succinate--CoA ligase [ADP-forming] subunit beta (389 aa).

The ATP-grasp domain maps to 9 to 244 (KEILRKFGVA…LDEEDPAEVE (236 aa)). Residues lysine 46, 53-55 (GRG), glutamate 99, alanine 102, and glutamate 107 contribute to the ATP site. Mg(2+) is bound by residues asparagine 199 and aspartate 213. Substrate is bound by residues asparagine 264 and 321–323 (GIM).

This sequence belongs to the succinate/malate CoA ligase beta subunit family. In terms of assembly, heterotetramer of two alpha and two beta subunits. The cofactor is Mg(2+).

It carries out the reaction succinate + ATP + CoA = succinyl-CoA + ADP + phosphate. The enzyme catalyses GTP + succinate + CoA = succinyl-CoA + GDP + phosphate. It participates in carbohydrate metabolism; tricarboxylic acid cycle; succinate from succinyl-CoA (ligase route): step 1/1. Succinyl-CoA synthetase functions in the citric acid cycle (TCA), coupling the hydrolysis of succinyl-CoA to the synthesis of either ATP or GTP and thus represents the only step of substrate-level phosphorylation in the TCA. The beta subunit provides nucleotide specificity of the enzyme and binds the substrate succinate, while the binding sites for coenzyme A and phosphate are found in the alpha subunit. In Paraburkholderia phytofirmans (strain DSM 17436 / LMG 22146 / PsJN) (Burkholderia phytofirmans), this protein is Succinate--CoA ligase [ADP-forming] subunit beta.